The chain runs to 185 residues: Elongation factor P (185 aa).

The protein belongs to the elongation factor P family.

Its subcellular location is the cytoplasm. Its pathway is protein biosynthesis; polypeptide chain elongation. In terms of biological role, involved in peptide bond synthesis. Stimulates efficient translation and peptide-bond synthesis on native or reconstituted 70S ribosomes in vitro. Probably functions indirectly by altering the affinity of the ribosome for aminoacyl-tRNA, thus increasing their reactivity as acceptors for peptidyl transferase. This Staphylococcus saprophyticus subsp. saprophyticus (strain ATCC 15305 / DSM 20229 / NCIMB 8711 / NCTC 7292 / S-41) protein is Elongation factor P.